The primary structure comprises 2839 residues: Neurofibromin (2839 aa).

At Ala2 the chain carries N-acetylalanine. Ser864 and Ser876 each carry phosphoserine. Residues His1251 to Ile1482 form the Ras-GAP domain. The CRAL-TRIO domain occupies Glu1580–Lys1738. The lipid binding stretch occupies residues Glu1580–Asp1837. Residues Ser2188 and Ser2467 each carry the phosphoserine modification. At Thr2514 the chain carries Phosphothreonine. Ser2515, Ser2521, Ser2523, and Ser2543 each carry phosphoserine. The Bipartite nuclear localization signal motif lies at Lys2555–Arg2571. At Thr2565 the chain carries Phosphothreonine. Phosphoserine occurs at positions 2597, 2802, and 2817. The disordered stretch occupies residues Thr2787–Val2839. The segment covering Leu2801–Ala2827 has biased composition (polar residues).

In terms of assembly, interacts with HTR6. Interacts with SPRED2. Ubiquitinated by RNF7/RBX2, leading to its degradation. As to expression, detected in brain, peripheral nerve, lung, colon and muscle.

It is found in the nucleus. The protein resides in the nucleolus. The protein localises to the cell membrane. In terms of biological role, stimulates the GTPase activity of Ras. NF1 shows greater affinity for Ras GAP, but lower specific activity. May be a regulator of Ras activity. This chain is Neurofibromin (NF1), found in Homo sapiens (Human).